The sequence spans 223 residues: CKLF-like MARVEL transmembrane domain-containing protein 5 (223 aa).

One can recognise an MARVEL domain in the interval 29–213; sequence FLTSHKGILL…DAFKIYRTEM (185 aa). 4 helical membrane-spanning segments follow: residues 35-55, 56-76, 162-182, and 186-206; these read GILL…FTAS, ISAY…FLFL, FLRC…AVTS, and AAIA…YDAF.

The protein belongs to the chemokine-like factor family. In terms of tissue distribution, highly expressed in the brain.

The protein localises to the membrane. The chain is CKLF-like MARVEL transmembrane domain-containing protein 5 (CMTM5) from Homo sapiens (Human).